The chain runs to 244 residues: rRNA adenine N-6-methyltransferase (244 aa).

Residues N11, I13, G38, E59, D84, and N101 each coordinate S-adenosyl-L-methionine.

The protein belongs to the class I-like SAM-binding methyltransferase superfamily. rRNA adenine N(6)-methyltransferase family.

It carries out the reaction adenosine(2085) in 23S rRNA + 2 S-adenosyl-L-methionine = N(6)-dimethyladenosine(2085) in 23S rRNA + 2 S-adenosyl-L-homocysteine + 2 H(+). Functionally, this protein produces a dimethylation of the adenine residue at position 2085 in 23S rRNA, resulting in reduced affinity between ribosomes and macrolide-lincosamide-streptogramin B antibiotics. The sequence is that of rRNA adenine N-6-methyltransferase (ermC') from Bacillus subtilis.